Reading from the N-terminus, the 104-residue chain is Urease subunit beta (104 aa).

It belongs to the urease beta subunit family. As to quaternary structure, heterotrimer of UreA (gamma), UreB (beta) and UreC (alpha) subunits. Three heterotrimers associate to form the active enzyme.

It is found in the cytoplasm. It carries out the reaction urea + 2 H2O + H(+) = hydrogencarbonate + 2 NH4(+). Its pathway is nitrogen metabolism; urea degradation; CO(2) and NH(3) from urea (urease route): step 1/1. The protein is Urease subunit beta of Rhodopseudomonas palustris (strain BisB5).